Consider the following 254-residue polypeptide: Undecaprenyl-diphosphatase (254 aa).

Transmembrane regions (helical) follow at residues 1–21, 41–61, 75–95, 96–116, 130–150, 174–194, 210–230, and 234–254; these read MGIIESIILGIVEGLTEFLPV, AHKAFEVAIQSGAILAVVFLY, LIIAFIPTGILGFLLYKIIKG, LFSPYIVSIMLIVGGLVFIAV, ILKIPYYKAFFIGVFQSIAMI, AEFSFLLAVPTMFAATSYDIM, TGFVTAFVFAVLAIKLFIGFV, and NFVPFGIYRIILGFIFLLFVL.

Belongs to the UppP family.

The protein resides in the cell inner membrane. The catalysed reaction is di-trans,octa-cis-undecaprenyl diphosphate + H2O = di-trans,octa-cis-undecaprenyl phosphate + phosphate + H(+). In terms of biological role, catalyzes the dephosphorylation of undecaprenyl diphosphate (UPP). Confers resistance to bacitracin. The polypeptide is Undecaprenyl-diphosphatase (Persephonella marina (strain DSM 14350 / EX-H1)).